Here is a 361-residue protein sequence, read N- to C-terminus: Serpentine receptor class X 45 (361 aa).

A run of 7 helical transmembrane segments spans residues 20 to 40, 58 to 78, 92 to 112, 133 to 153, 176 to 196, 242 to 262, and 278 to 298; these read LLIF…AFYI, AAGD…VLFF, FAQL…VISL, TTFL…FLVI, MINV…MFAI, LLYV…PVPL, and LLTT…TLIF. N-linked (GlcNAc...) asparagine glycosylation occurs at Asn-317.

It belongs to the G-protein coupled receptor 1 family.

It is found in the cell membrane. The protein is Serpentine receptor class X 45 (srx-45) of Caenorhabditis elegans.